A 360-amino-acid chain; its full sequence is Phospho-N-acetylmuramoyl-pentapeptide-transferase (360 aa).

The next 10 helical transmembrane spans lie at 21–41 (YLSF…LWMG), 73–93 (TMGG…WANL), 94–114 (SNPY…VGFV), 132–152 (WKYF…YAYG), 168–188 (VMPQ…VGTS), 199–219 (GLAI…AWAT), 236–256 (ASEL…FLWF), 263–283 (VFMG…IAVL), 288–308 (LVLV…ILQV), and 338–358 (VIVR…ATLK).

This sequence belongs to the glycosyltransferase 4 family. MraY subfamily. Mg(2+) serves as cofactor.

Its subcellular location is the cell inner membrane. It catalyses the reaction UDP-N-acetyl-alpha-D-muramoyl-L-alanyl-gamma-D-glutamyl-meso-2,6-diaminopimeloyl-D-alanyl-D-alanine + di-trans,octa-cis-undecaprenyl phosphate = di-trans,octa-cis-undecaprenyl diphospho-N-acetyl-alpha-D-muramoyl-L-alanyl-D-glutamyl-meso-2,6-diaminopimeloyl-D-alanyl-D-alanine + UMP. It functions in the pathway cell wall biogenesis; peptidoglycan biosynthesis. Its function is as follows. Catalyzes the initial step of the lipid cycle reactions in the biosynthesis of the cell wall peptidoglycan: transfers peptidoglycan precursor phospho-MurNAc-pentapeptide from UDP-MurNAc-pentapeptide onto the lipid carrier undecaprenyl phosphate, yielding undecaprenyl-pyrophosphoryl-MurNAc-pentapeptide, known as lipid I. In Vibrio vulnificus (strain YJ016), this protein is Phospho-N-acetylmuramoyl-pentapeptide-transferase.